The following is a 332-amino-acid chain: Acetyl-coenzyme A carboxylase carboxyl transferase subunit alpha (332 aa).

One can recognise a CoA carboxyltransferase C-terminal domain in the interval 44-298 (QLESRAQNLR…KETLVNNLEE (255 aa)).

Belongs to the AccA family. Acetyl-CoA carboxylase is a heterohexamer composed of biotin carboxyl carrier protein (AccB), biotin carboxylase (AccC) and two subunits each of ACCase subunit alpha (AccA) and ACCase subunit beta (AccD).

The protein localises to the cytoplasm. The enzyme catalyses N(6)-carboxybiotinyl-L-lysyl-[protein] + acetyl-CoA = N(6)-biotinyl-L-lysyl-[protein] + malonyl-CoA. Its pathway is lipid metabolism; malonyl-CoA biosynthesis; malonyl-CoA from acetyl-CoA: step 1/1. Its function is as follows. Component of the acetyl coenzyme A carboxylase (ACC) complex. First, biotin carboxylase catalyzes the carboxylation of biotin on its carrier protein (BCCP) and then the CO(2) group is transferred by the carboxyltransferase to acetyl-CoA to form malonyl-CoA. The polypeptide is Acetyl-coenzyme A carboxylase carboxyl transferase subunit alpha (Crocosphaera subtropica (strain ATCC 51142 / BH68) (Cyanothece sp. (strain ATCC 51142))).